Consider the following 409-residue polypeptide: Broad specificity amino-acid racemase (409 aa).

A signal peptide spans 1–24 (MPFRRTLLAASLALLITGQAPLYA). The cysteines at positions 71 and 97 are disulfide-linked. The Proton acceptor role is filled by Lys75. Lys75 carries the post-translational modification N6-(pyridoxal phosphate)lysine. Arg174 contacts substrate. Catalysis depends on Tyr301, which acts as the Proton acceptor. Substrate is bound at residue Met349.

This sequence belongs to the alanine racemase family. Bsr subfamily. Pyridoxal 5'-phosphate serves as cofactor.

It is found in the periplasm. It carries out the reaction an L-alpha-amino acid = a D-alpha-amino acid. The enzyme catalyses L-lysine = D-lysine. It catalyses the reaction L-arginine = D-arginine. The catalysed reaction is L-glutamine = D-glutamine. Amino-acid racemase able to utilize a broad range of substrates. Reversibly racemizes 9 of the 19 natural chiral amino acids known, including both positively charged amino acids (Lys, Arg and His) and non-beta-branched aliphatic amino acids (Ala, Leu, Met, Ser, Gln and Asn). Among these amino acids, activity is the highest with lysine and arginine, and poor or very poor with the others. Plays a primary role in the catabolism of basic amino acid, that allows P.putida strain KT2440 to grow on L-Lys and L-Arg as the sole source of carbon and nitrogen, through conversion to their respective D-enantiomers. This Pseudomonas putida (strain ATCC 47054 / DSM 6125 / CFBP 8728 / NCIMB 11950 / KT2440) protein is Broad specificity amino-acid racemase.